A 658-amino-acid chain; its full sequence is Protein translocase subunit SecA 3 (658 aa).

ATP-binding positions include glutamine 111, 129–133, and aspartate 536; that span reads GEGKT.

Belongs to the SecA family. Monomer and homodimer. Part of the essential Sec protein translocation apparatus which comprises SecA, SecYEG and auxiliary proteins SecDF-YajC and YidC.

It localises to the cell inner membrane. Its subcellular location is the cytoplasm. The enzyme catalyses ATP + H2O + cellular proteinSide 1 = ADP + phosphate + cellular proteinSide 2.. In terms of biological role, part of the Sec protein translocase complex. Interacts with the SecYEG preprotein conducting channel. Has a central role in coupling the hydrolysis of ATP to the transfer of proteins into and across the cell membrane, serving both as a receptor for the preprotein-SecB complex and as an ATP-driven molecular motor driving the stepwise translocation of polypeptide chains across the membrane. This Magnetococcus marinus (strain ATCC BAA-1437 / JCM 17883 / MC-1) protein is Protein translocase subunit SecA 3.